The chain runs to 376 residues: 5-hydroxytryptamine receptor 1D (376 aa).

A disordered region spans residues 1 to 22 (MSPPNQSEEGLPQEASNRSLNA). N-linked (GlcNAc...) asparagine glycans are attached at residues N5, N17, and N21. Helical transmembrane passes span 39–64 (VSLVVVLSIITLATVLSNAFVLTTIL), 76–97 (LIGSLATTDLLVSILVMPISIA), and 110–134 (LCDIWVSSDITCCTASILHLCVIAL). C111 and C188 are oxidised to a cystine. The serotonin site is built by D118 and C122. The DRY motif; important for ligand-induced conformation changes motif lies at 135 to 137 (DRY). Helical transmembrane passes span 155–176 (AGAMIAAVWVISICISIPPLFW), 195–218 (ISYTIYSTCGAFYIPSVLLIILYS), 300–325 (KTLGIILGAFIVCWLPFFVVSLVLPI), and 335–358 (ALFDFFTWLGYLNSLINPIIYTVF). S320 contacts serotonin. Positions 351-355 (NPIIY) match the NPxxY motif; important for ligand-induced conformation changes and signaling motif.

Belongs to the G-protein coupled receptor 1 family. As to quaternary structure, homodimer. Heterodimer with HTR1B.

The protein localises to the cell membrane. In terms of biological role, G-protein coupled receptor for 5-hydroxytryptamine (serotonin). Also functions as a receptor for ergot alkaloid derivatives, various anxiolytic and antidepressant drugs and other psychoactive substances. Ligand binding causes a conformation change that triggers signaling via guanine nucleotide-binding proteins (G proteins) and modulates the activity of downstream effectors, such as adenylate cyclase. HTR1D is coupled to G(i)/G(o) G alpha proteins and mediates inhibitory neurotransmission by inhibiting adenylate cyclase activity. Regulates the release of 5-hydroxytryptamine in the brain, and thereby affects neural activity. May also play a role in regulating the release of other neurotransmitters. May play a role in vasoconstriction. The polypeptide is 5-hydroxytryptamine receptor 1D (HTR1D) (Cavia porcellus (Guinea pig)).